Here is a 299-residue protein sequence, read N- to C-terminus: Methionyl-tRNA formyltransferase (299 aa).

Residue 109–112 coordinates (6S)-5,6,7,8-tetrahydrofolate; it reads SLLP.

Belongs to the Fmt family.

The catalysed reaction is L-methionyl-tRNA(fMet) + (6R)-10-formyltetrahydrofolate = N-formyl-L-methionyl-tRNA(fMet) + (6S)-5,6,7,8-tetrahydrofolate + H(+). In terms of biological role, attaches a formyl group to the free amino group of methionyl-tRNA(fMet). The formyl group appears to play a dual role in the initiator identity of N-formylmethionyl-tRNA by promoting its recognition by IF2 and preventing the misappropriation of this tRNA by the elongation apparatus. The chain is Methionyl-tRNA formyltransferase from Wolbachia pipientis subsp. Culex pipiens (strain wPip).